The sequence spans 45 residues: Iota-conotoxin-like R11.13 (45 aa).

4 disulfides stabilise this stretch: Cys-5/Cys-19, Cys-12/Cys-22, Cys-18/Cys-27, and Cys-21/Cys-36. Leu-43 carries the post-translational modification D-leucine. Residue Arg-45 is a propeptide, removed by a carboxypeptidase.

Belongs to the conotoxin I1 superfamily. In terms of tissue distribution, expressed by the venom duct.

It is found in the secreted. In terms of biological role, iota-conotoxins bind to voltage-gated sodium channels (Nav) and act as agonists by shifting the voltage-dependence of activation to more hyperpolarized levels. Produces general excitatory symptoms. The sequence is that of Iota-conotoxin-like R11.13 from Conus radiatus (Rayed cone).